The primary structure comprises 129 residues: Small ribosomal subunit protein uS11 (129 aa).

The protein belongs to the universal ribosomal protein uS11 family. Part of the 30S ribosomal subunit. Interacts with proteins S7 and S18. Binds to IF-3.

Its function is as follows. Located on the platform of the 30S subunit, it bridges several disparate RNA helices of the 16S rRNA. Forms part of the Shine-Dalgarno cleft in the 70S ribosome. This is Small ribosomal subunit protein uS11 from Phenylobacterium zucineum (strain HLK1).